Here is a 476-residue protein sequence, read N- to C-terminus: RuvB-like helicase 2 (476 aa).

Residue 72–80 participates in ATP binding; the sequence is VGPPSTGKT.

The protein belongs to the RuvB family. In terms of assembly, may form heterododecamers with RVB1. Component of the SWR1 chromatin remodeling complex, the INO80 chromatin remodeling complex, and of the R2TP complex.

It is found in the nucleus. The catalysed reaction is ATP + H2O = ADP + phosphate + H(+). Functionally, DNA helicase which participates in several chromatin remodeling complexes, including the SWR1 and the INO80 complexes. The SWR1 complex mediates the ATP-dependent exchange of histone H2A for the H2A variant HZT1 leading to transcriptional regulation of selected genes by chromatin remodeling. The INO80 complex remodels chromatin by shifting nucleosomes and is involved in DNA repair. Also involved in pre-rRNA processing. The protein is RuvB-like helicase 2 (RVB2) of Mycosarcoma maydis (Corn smut fungus).